A 526-amino-acid chain; its full sequence is Outer capsid protein VP5 (526 aa).

The segment at 1 to 42 (MGKVIRSLNRFGKKVGNALTSNTAKKIYSTIGKAADEFLESE) is involved in membrane permeabilization.

Belongs to the orbivirus VP5 family.

The protein localises to the virion. VP5 protein is one of the two proteins (with VP2) which constitute the virus particle outer capsid. Acts as a membrane permeabilization protein that mediates release of viral particles from endosomal compartments into the cytoplasm. Permeabilization activity is probably negatively regulated by VP2 and is triggered by endosomal degradation of VP2 and exposure to low pH. In Bluetongue virus 1 (isolate South Africa) (BTV 1), this protein is Outer capsid protein VP5 (Segment-6).